The primary structure comprises 267 residues: Ubiquinone biosynthesis protein COQ4 homolog, mitochondrial (267 aa).

Residues His-170, Asp-171, His-174, and Glu-186 each contribute to the Zn(2+) site.

This sequence belongs to the COQ4 family. In terms of assembly, component of a multi-subunit COQ enzyme complex. The cofactor is Zn(2+).

The protein resides in the mitochondrion inner membrane. The enzyme catalyses a 4-hydroxy-3-methoxy-5-(all-trans-polyprenyl)benzoate + H(+) = a 2-methoxy-6-(all-trans-polyprenyl)phenol + CO2. It functions in the pathway cofactor biosynthesis; ubiquinone biosynthesis. In terms of biological role, lyase that catalyzes the C1-decarboxylation of 4-hydroxy-3-methoxy-5-(all-trans-polyprenyl)benzoic acid into 2-methoxy-6-(all-trans-polyprenyl)phenol during ubiquinone biosynthesis. This chain is Ubiquinone biosynthesis protein COQ4 homolog, mitochondrial, found in Drosophila pseudoobscura pseudoobscura (Fruit fly).